The sequence spans 691 residues: Pre-mRNA-splicing factor CLF1 (691 aa).

16 HAT repeats span residues 52–84, 86–118, 120–152, 154–185, 187–218, 220–258, 260–294, 304–336, 338–372, 382–418, 420–451, 453–485, 487–521, 523–554, 574–612, and 617–650; these read EYQG…WELE, KEYA…AELK, RNIN…VEEM, GNIP…LEQR, GEYD…FEEE, GTSD…YEAK, HDLD…FEKQ, VVLS…LEEA, GDID…LWIF, KNPE…FEIR, GDLA…MEQK, YEFG…LERG, DDLD…FEEE, GEYD…FEIN, EAKA…FEKT, and EDIE…YIFP.

It belongs to the crooked-neck family. In terms of assembly, associated with the spliceosome.

It is found in the nucleus. Functionally, involved in pre-mRNA splicing and cell cycle progression. Required for the spliceosome assembly and initiation of the DNA replication. The chain is Pre-mRNA-splicing factor CLF1 (CLF1) from Pyricularia oryzae (strain 70-15 / ATCC MYA-4617 / FGSC 8958) (Rice blast fungus).